Reading from the N-terminus, the 291-residue chain is Protease HtpX homolog (291 aa).

Helical transmembrane passes span 4–24 and 38–58; these read VFLF…SARL and MGML…ISLL. Residue His144 participates in Zn(2+) binding. The active site involves Glu145. Residue His148 coordinates Zn(2+). 2 consecutive transmembrane segments (helical) span residues 159-179 and 199-219; these read LIQG…AYAL and ISSI…VMYF. Position 224 (Glu224) interacts with Zn(2+).

The protein belongs to the peptidase M48B family. The cofactor is Zn(2+).

It localises to the cell inner membrane. The protein is Protease HtpX homolog of Chlorobium phaeovibrioides (strain DSM 265 / 1930) (Prosthecochloris vibrioformis (strain DSM 265)).